The chain runs to 202 residues: Na(+)-translocating NADH-quinone reductase subunit E (202 aa).

A run of 6 helical transmembrane segments spans residues 5–25 (VSLFITSVFIENMALAYFLGM), 35–55 (VSTAIGLGVAVVVVMAITVPL), 81–101 (FLGLLSYIGLIAATVQILEMF), 114–134 (GVFLPLITVNCAILGGVLFMV), 144–164 (VVYGVGAGFGWALAITALAGI), and 180–200 (LGITFITVGLMSLGFMSFGGM).

The protein belongs to the NqrDE/RnfAE family. Composed of six subunits; NqrA, NqrB, NqrC, NqrD, NqrE and NqrF.

Its subcellular location is the cell inner membrane. The catalysed reaction is a ubiquinone + n Na(+)(in) + NADH + H(+) = a ubiquinol + n Na(+)(out) + NAD(+). In terms of biological role, NQR complex catalyzes the reduction of ubiquinone-1 to ubiquinol by two successive reactions, coupled with the transport of Na(+) ions from the cytoplasm to the periplasm. NqrA to NqrE are probably involved in the second step, the conversion of ubisemiquinone to ubiquinol. This is Na(+)-translocating NADH-quinone reductase subunit E from Psychrobacter arcticus (strain DSM 17307 / VKM B-2377 / 273-4).